Reading from the N-terminus, the 154-residue chain is NADPH-dependent 7-cyano-7-deazaguanine reductase (154 aa).

Over residues 1–23 (MPNTDVSSLSMLGQQTETAQSPE) the composition is skewed to polar residues. A disordered region spans residues 1–26 (MPNTDVSSLSMLGQQTETAQSPEQAV). Cys52 functions as the Thioimide intermediate in the catalytic mechanism. The active-site Proton donor is Asp59. Residues 74–76 (VES) and 93–94 (HE) each bind substrate.

This sequence belongs to the GTP cyclohydrolase I family. QueF type 1 subfamily.

Its subcellular location is the cytoplasm. The catalysed reaction is 7-aminomethyl-7-carbaguanine + 2 NADP(+) = 7-cyano-7-deazaguanine + 2 NADPH + 3 H(+). Its pathway is tRNA modification; tRNA-queuosine biosynthesis. In terms of biological role, catalyzes the NADPH-dependent reduction of 7-cyano-7-deazaguanine (preQ0) to 7-aminomethyl-7-deazaguanine (preQ1). The protein is NADPH-dependent 7-cyano-7-deazaguanine reductase of Rhizobium leguminosarum bv. trifolii (strain WSM2304).